A 131-amino-acid chain; its full sequence is Profilin-5 (131 aa).

It belongs to the profilin family. In terms of assembly, occurs in many kinds of cells as a complex with monomeric actin in a 1:1 ratio.

The protein localises to the cytoplasm. It localises to the cytoskeleton. In terms of biological role, binds to actin and affects the structure of the cytoskeleton. At high concentrations, profilin prevents the polymerization of actin, whereas it enhances it at low concentrations. By binding to PIP2, it inhibits the formation of IP3 and DG. This Hevea brasiliensis (Para rubber tree) protein is Profilin-5.